Consider the following 423-residue polypeptide: Protein CLP1 homolog (423 aa).

Residues glutamate 16, lysine 57, and 119–124 each bind ATP; that span reads DVGKST.

Belongs to the Clp1 family. Clp1 subfamily.

It localises to the nucleus. In terms of biological role, required for endonucleolytic cleavage during polyadenylation-dependent pre-mRNA 3'-end formation. The sequence is that of Protein CLP1 homolog (cbc) from Drosophila sechellia (Fruit fly).